Reading from the N-terminus, the 443-residue chain is UDP-glucuronic acid decarboxylase 4 (443 aa).

N-acetylalanine is present on Ala-2. The Cytoplasmic portion of the chain corresponds to 2-43; the sequence is ASELTNRRHEIEQPEAESYYPKPIKPWFVAIRPIRYMLREQR. Residues 44–64 form a helical; Signal-anchor for type II membrane protein membrane-spanning segment; that stretch reads LVFVLVGIAIATLGFTIFSKS. The Lumenal portion of the chain corresponds to 65-443; the sequence is SNHQPIPYDV…DSSTTSSSTE (379 aa). 151-176 is a binding site for NAD(+); it reads DNFFTGRKENVMHHFNNPNFEMIRHD. A substrate-binding site is contributed by Arg-260. The active-site Proton acceptor is the Tyr-263. 263 to 267 contacts NAD(+); the sequence is YDEGK. Asn-292 contacts substrate. An NAD(+)-binding site is contributed by Arg-304. Substrate contacts are provided by residues 305–309, 322–329, and 389–393; these read VVSNF, YGDGKQTR, and DPHKR.

This sequence belongs to the NAD(P)-dependent epimerase/dehydratase family. UDP-glucuronic acid decarboxylase subfamily. NAD(+) serves as cofactor.

The protein localises to the golgi apparatus. It localises to the golgi stack membrane. The enzyme catalyses UDP-alpha-D-glucuronate + H(+) = UDP-alpha-D-xylose + CO2. It functions in the pathway nucleotide-sugar biosynthesis; UDP-alpha-D-xylose biosynthesis; UDP-alpha-D-xylose from UDP-alpha-D-glucuronate: step 1/1. In terms of biological role, catalyzes the NAD-dependent decarboxylation of UDP-glucuronic acid to UDP-xylose. Necessary for the biosynthesis of the core tetrasaccharide in glycosaminoglycan biosynthesis. The sequence is that of UDP-glucuronic acid decarboxylase 4 (UXS4) from Arabidopsis thaliana (Mouse-ear cress).